Here is a 425-residue protein sequence, read N- to C-terminus: Polycomb protein esc (425 aa).

Basic and acidic residues predominate over residues M1–N10. A disordered region spans residues M1 to Y64. Residues E11 to G20 are compositionally biased toward acidic residues. S15 carries the phosphoserine modification. The span at D21 to T42 shows a compositional bias: low complexity. The span at R43 to A60 shows a compositional bias: basic residues. WD repeat units follow at residues N71–L114, V126–N165, G168–I208, G214–K253, I284–E321, E340–A379, and R388–S424.

It belongs to the WD repeat ESC family. In terms of assembly, component of the polycomb repressive complex 2 (PRC2, also known as the Esc/E(Z) complex), composed of Caf1-55, esc, E(z), Su(z)12, and possibly pho. PRC2 associates with the accessory components Jarid2 and jing to form the PRC2 Jarid2-jing variant (PRC2.2). PRC2 may also associate with Pcl and HDAC1/Rpd3 during early embryogenesis. This complex is distinct from the PRC1 complex, which contains many other PcG proteins like Pc, Ph, Psc, Su(z)2. The two complexes however cooperate and interact together during the first 3 hours of development to establish PcG silencing. Interacts with corto in vitro. As to expression, widely expressed.

It is found in the nucleus. Polycomb group (PcG) protein. While PcG proteins are generally required to maintain the transcriptionally repressive state of homeotic genes throughout development, this protein is specifically required during the first 6 hours of embryogenesis to establish the repressed state. Component of the Esc/E(z) complex, which methylates 'Lys-9' and 'Lys-27' residues of histone H3, leading to transcriptional repression of the affected target gene. The Esc/E(z) complex is necessary but not sufficient for the repression of homeotic target genes, suggesting that the recruitment of the distinct PRC1 complex is also required. In Drosophila melanogaster (Fruit fly), this protein is Polycomb protein esc (esc).